A 492-amino-acid chain; its full sequence is Transmembrane protein 104 homolog (492 aa).

Topologically, residues 1–17 (MQSNTDSSTSGTYSQTV) are cytoplasmic. A helical transmembrane segment spans residues 18 to 38 (GLLYVFNLIVGTGALALPKAF). The Extracellular portion of the chain corresponds to 39–44 (QTAGWL). A helical membrane pass occupies residues 45 to 65 (LSITLLTFSAFMSYVAATFVI). Over 66–113 (EALSVANAVLSKKRRVEYDDVVVADGPSTFEISKKVEVSEMASMFLSK) the chain is Cytoplasmic. A helical transmembrane segment spans residues 114–134 (VSLVFSYFAIIIYLFGDLAIY). Topologically, residues 135–176 (STTVPKSAMNIVCATINASTVKSSDPCHESWPEILTRMTVYR) are extracellular. A glycan (N-linked (GlcNAc...) asparagine) is linked at asparagine 151. The chain crosses the membrane as a helical span at residues 177-197 (FFVIIFVVVVCLPMVIAGITK). The Cytoplasmic portion of the chain corresponds to 198 to 209 (TRHIQIMTTLSR). The helical transmembrane segment at 210-230 (WAAFILMISLATMQLSSDGAA) threads the bilayer. Over 231–237 (AHPPAYN) the chain is Extracellular. A helical transmembrane segment spans residues 238–258 (FHGFGSLFGCAVYAFMCHHSI). Topologically, residues 259-274 (PSLITPMRTKDNVFGK) are cytoplasmic. A helical membrane pass occupies residues 275–295 (IALVYGVVGVFYFTLSLTGAF). Over 296-324 (AFEHVQDIYTLNFFHDGNTSFIYSIIDYF) the chain is Extracellular. An N-linked (GlcNAc...) asparagine glycan is attached at asparagine 313. The chain crosses the membrane as a helical span at residues 325 to 345 (LALFPIITLTSSYPIIALTLI). The Cytoplasmic portion of the chain corresponds to 346–392 (NNFNVVKDILCPKVGQENESLLEADSLVEDNDTDDEREARNARNEKS). Residues 393–413 (VFDVLVPALVLALPTFLSLLT) form a helical membrane-spanning segment. The Extracellular segment spans residues 414-415 (DD). The helical transmembrane segment at 416 to 436 (MLLLASITGSFPGVAVQFAIP) threads the bilayer. The Cytoplasmic portion of the chain corresponds to 437–466 (CLLVTAARKHARSVLNFPVPRKNNSPFQSP). Residues 467–487 (IWIVLISSWAGFSMIMVLLNL) traverse the membrane as a helical segment. Over 488 to 492 (VGVKF) the chain is Extracellular.

This sequence belongs to the TMEM104 family.

The protein resides in the membrane. The protein is Transmembrane protein 104 homolog of Caenorhabditis elegans.